The sequence spans 575 residues: Alpha-humulene synthase (575 aa).

Asp325, Asp329, Asp469, and Glu477 together coordinate Mg(2+). The DDXXD motif motif lies at 325-329 (DDLYD).

It belongs to the terpene synthase family. Tpsa subfamily. Requires Mg(2+) as cofactor. Mn(2+) is required as a cofactor.

The catalysed reaction is (2E,6E)-farnesyl diphosphate = alpha-humulene + diphosphate. Its pathway is sesquiterpene biosynthesis. It functions in the pathway terpene metabolism; oleoresin biosynthesis. Terpene synthase (TPS) involved in the biosynthesis of sesquiterpene natural products included in conifer oleoresin secretions and volatile emissions; these compounds contribute to biotic and abiotic stress defense against herbivores and pathogens. Catalyzes the conversion of (2E,6E)-farnesyl diphosphate (FPP) to (1E,4E,8E)-alpha-humulene. The protein is Alpha-humulene synthase of Picea glauca (White spruce).